The sequence spans 503 residues: Glucosaminyl-phosphatidylinositol-acyltransferase PIGW (503 aa).

Over 1-21 the chain is Lumenal; it reads MSQKQLKEAFVRNLSGTSVLE. N13 carries an N-linked (GlcNAc...) asparagine glycan. Residues 22–42 form a helical membrane-spanning segment; sequence VTQGLCFPAFCILCRGLWIIF. Residues 43 to 48 lie on the Cytoplasmic side of the membrane; that stretch reads SQHVCS. The helical transmembrane segment at 49–71 threads the bilayer; sequence FSNTWSTRFLMDFVVLIVPLVIT. Residues 72–74 lie on the Lumenal side of the membrane; the sequence is LTV. The helical transmembrane segment at 75–97 threads the bilayer; sequence LSSFILLENLTVIVWGAWLLYQI. Residues 98–131 are Cytoplasmic-facing; that stretch reads YHRRTCYAKVPVQKVFANFLKISLESEYNPAITC. Residues 132 to 152 form a helical membrane-spanning segment; sequence YRVINSVFTAIAILAVDFPLF. Topologically, residues 153 to 160 are lumenal; sequence PRRFAKTE. A helical transmembrane segment spans residues 161–181; sequence LYGTGAMDFGVGGFIFGAAMV. The Cytoplasmic portion of the chain corresponds to 182 to 201; the sequence is CPEVRRKSIEESRFNYLRKS. A helical transmembrane segment spans residues 202–222; that stretch reads LYSVWPLVFLGMGRLVIIKSI. Residues 223 to 236 are Lumenal-facing; the sequence is GYQEHSTEYGIHWN. A helical transmembrane segment spans residues 237 to 257; that stretch reads FFFTIIVVRLVTSLLLIIFPL. Topologically, residues 258–259 are cytoplasmic; that stretch reads NK. The chain crosses the membrane as a helical span at residues 260–280; the sequence is SWIVAVSITVVYQLALDYTPL. The Lumenal portion of the chain corresponds to 281–304; that stretch reads KRILLYGTDGSGTRVGFLNANREG. The helical transmembrane segment at 305 to 325 threads the bilayer; that stretch reads IISTLGYVTIHMAGVQTGLYV. Over 326-339 the chain is Cytoplasmic; sequence LKGRAQVRDWIKAT. The helical transmembrane segment at 340–360 threads the bilayer; it reads CWVFSVAVGFFISLHIVQVNI. Residues 361-380 are Lumenal-facing; the sequence is EAVSRRMANLAFCLWVVASS. A helical transmembrane segment spans residues 381–401; it reads LMLLSCLLLSGIILSFAQFLI. Residues 402-447 lie on the Cytoplasmic side of the membrane; that stretch reads KGSLVPCSWKLIQSPTTHKNHSESLILEAEKNQPSLCLITALNRNQ. A Phosphoserine modification is found at S415. A helical membrane pass occupies residues 448–468; the sequence is LFFFLLSNITTGLINLTMDTL. Residues 469–472 lie on the Lumenal side of the membrane; the sequence is HTGA. A helical membrane pass occupies residues 473–493; the sequence is LWTLVVLSIYMFTNCLVIYVL. Over 494 to 503 the chain is Cytoplasmic; that stretch reads DLQGKTIKFW.

The protein belongs to the PIGW family.

The protein localises to the endoplasmic reticulum membrane. It participates in glycolipid biosynthesis; glycosylphosphatidylinositol-anchor biosynthesis. In terms of biological role, acyltransferase that catalyzes the acyl transfer from an acyl-CoA at the 2-OH position of the inositol ring of glucosaminyl phosphatidylinositol (GlcN-PI) to generate GlcN-(acyl)PI and participates in the fourth step of GPI-anchor biosynthesi. Required for the transport of GPI-anchored proteins to the plasma membrane. Acetylation during GPI-anchor biosynthesis is not essential for the subsequent mannosylation and is usually removed soon after the attachment of GPIs to proteins. This is Glucosaminyl-phosphatidylinositol-acyltransferase PIGW from Mus musculus (Mouse).